The primary structure comprises 1268 residues: Truncated polyprotein 1aTF (1268 aa).

Residues 8–28 form a C4-type; atypical zinc finger; sequence CMCTPAARVFWNAGQVFCTRC. Residues 69-180 form the Peptidase C31 domain; that stretch reads ECTPSGCCWL…QPFCPFEEAH (112 aa). The tract at residues 69-182 is PCP1-alpha; sequence ECTPSGCCWL…FCPFEEAHSD (114 aa). Residues cysteine 76 and histidine 146 each act as for Nsp1-alpha papain-like cysteine proteinase activity in the active site. The interval 269-384 is PCP1-beta; that stretch reads PNVFDGKCWL…IFRFGAHKWY (116 aa). Residues 269–385 enclose the Peptidase C32 domain; the sequence is PNVFDGKCWL…FRFGAHKWYG (117 aa). Catalysis depends on for Nsp1-beta papain-like cysteine proteinase activity residues cysteine 276 and histidine 345. One can recognise a Peptidase C33 domain in the interval 420-527; it reads TYSPPTDGSC…VGVCSEGCVA (108 aa). Residues cysteine 429 and histidine 498 each act as for Nsp2 cysteine proteinase activity in the active site. Disordered stretches follow at residues 728–758 and 1027–1064; these read AIGS…SHPA and SVTP…SHAS. Residues 737–749 show a composition bias toward basic and acidic residues; it reads DSKRENMHNSRED. 4 helical membrane-spanning segments follow: residues 1119–1139, 1153–1173, 1194–1214, and 1233–1253; these read LWLQ…CSVV, FLVL…LLLY, VMLS…AALW, and VISG…FLLF.

The protein resides in the host nucleus. The protein localises to the host cytoplasm. It localises to the host endoplasmic reticulum membrane. It is found in the membrane. Is essential for viral subgenomic mRNA synthesis. In terms of biological role, inhibits IFN-beta production. Counteracts the action of NF-kappaB by decreasing the phosphorylation of IkappaB-alpha, such that the degradation of IkappaB-alpha is suppressed. This leads to the blockage of NF-kappaB nuclear translocation and thus interference of NF-kappaB activation. Also seems to inhibit IRF3-dependent pathways. Functionally, nsp1-beta transactivates the programmed ribosomal frameshifting event leading to the expression of the 1aTF polyprotein. The protein is Truncated polyprotein 1aTF of Porcine reproductive and respiratory syndrome virus (isolate Pig/United States/SD 01-08/2001) (PRRSV).